A 79-amino-acid polypeptide reads, in one-letter code: MPTVRVKEGENPEYALRRFKRSCEKAGILTELRRREFYEKPTAERKRKQAAAVKRHLKKISRDVSSRRGVGHRRKKSTT.

2 stretches are compositionally biased toward basic residues: residues 47 to 59 (RKQA…HLKK) and 69 to 79 (GVGHRRKKSTT). The interval 47-79 (RKQAAAVKRHLKKISRDVSSRRGVGHRRKKSTT) is disordered.

The protein belongs to the bacterial ribosomal protein bS21 family.

This Legionella pneumophila (strain Paris) protein is Small ribosomal subunit protein bS21.